A 66-amino-acid chain; its full sequence is Photosystem II reaction center protein H (66 aa).

A helical membrane pass occupies residues 27–47 (GAVPVMTVIGLLLLVFLVILL).

Belongs to the PsbH family. PSII is composed of 1 copy each of membrane proteins PsbA, PsbB, PsbC, PsbD, PsbE, PsbF, PsbH, PsbI, PsbJ, PsbK, PsbL, PsbM, PsbT, PsbX, PsbY, Psb30/Ycf12, peripheral proteins PsbO, CyanoQ (PsbQ), PsbU, PsbV and a large number of cofactors. It forms dimeric complexes.

It localises to the cellular thylakoid membrane. One of the components of the core complex of photosystem II (PSII), required for its stability and/or assembly. PSII is a light-driven water:plastoquinone oxidoreductase that uses light energy to abstract electrons from H(2)O, generating O(2) and a proton gradient subsequently used for ATP formation. It consists of a core antenna complex that captures photons, and an electron transfer chain that converts photonic excitation into a charge separation. The chain is Photosystem II reaction center protein H from Prochlorococcus marinus (strain MIT 9215).